Consider the following 248-residue polypeptide: MGQTWSPLTHAGAREAIALACRVLAHRGLADGILGHISLRIGENSLLVRCRGPQERGLAFTEASDIRLVDLDGNPAAEGELEGGYSAPNELPLHTELLRQRPDINAVVHAHPPRVVAADLAGLGIRPIVGAFDIPGTRLAAGGVPVYPRGVLVRNRQLAAEMLHAMGDRPVVLLRGHGLTSAAGSVEQAVLQAISVDTLAGLSLQVTSAGGALKDLPDSDMAELPDLGGSFNTQTAWRHELARISAAW.

The active-site Proton donor/acceptor is the E90. 4 residues coordinate a divalent metal cation: E90, H109, H111, and H177.

This sequence belongs to the aldolase class II family. A divalent metal cation serves as cofactor.

It catalyses the reaction 3,4-dihydroxyphthalate + H(+) = 3,4-dihydroxybenzoate + CO2. It participates in xenobiotic degradation; phthalate degradation. Its function is as follows. Catalyzes the decarboxylation of 3,4-dihydroxyphthalate to protocatechuate (3,4-dihydroxybenzoate) during phthalate metabolism. This is 3,4-dihydroxyphthalate decarboxylase from Arthrobacter keyseri.